The chain runs to 909 residues: Lon protease homolog 2, peroxisomal (909 aa).

The Lon N-terminal domain occupies 1 to 230; it reads MAPVRAPTAR…KVIELLDRQV (230 aa). Residues 249–269 are disordered; sequence FPMDPDSTKPGKVKPPVKAPG. 463-470 provides a ligand contact to ATP; that stretch reads GPPGVGKT. The Lon proteolytic domain occupies 706–893; that stretch reads TSRPGIVTGL…WEAIRYVWPD (188 aa). Active-site residues include Ser-799 and Lys-842. The Microbody targeting signal signature appears at 907–909; that stretch reads SRL.

The protein belongs to the peptidase S16 family.

It is found in the peroxisome matrix. Its subcellular location is the cytoplasm. The enzyme catalyses Hydrolysis of proteins in presence of ATP.. Functionally, ATP-dependent serine protease that mediates the selective degradation of misfolded and unassembled polypeptides in the peroxisomal matrix. Necessary for type 2 peroxisome targeting signal (PTS2)-containing protein processing and facilitates peroxisome matrix protein import. The polypeptide is Lon protease homolog 2, peroxisomal (Sordaria macrospora (strain ATCC MYA-333 / DSM 997 / K(L3346) / K-hell)).